Reading from the N-terminus, the 178-residue chain is ATP-dependent protease subunit HslV (178 aa).

The active site involves T7. Na(+) is bound by residues G162, C165, and T168.

The protein belongs to the peptidase T1B family. HslV subfamily. As to quaternary structure, a double ring-shaped homohexamer of HslV is capped on each side by a ring-shaped HslU homohexamer. The assembly of the HslU/HslV complex is dependent on binding of ATP.

It is found in the cytoplasm. It catalyses the reaction ATP-dependent cleavage of peptide bonds with broad specificity.. Its activity is regulated as follows. Allosterically activated by HslU binding. In terms of biological role, protease subunit of a proteasome-like degradation complex believed to be a general protein degrading machinery. The polypeptide is ATP-dependent protease subunit HslV (Dechloromonas aromatica (strain RCB)).